A 484-amino-acid polypeptide reads, in one-letter code: Chromosomal replication initiator protein DnaA (484 aa).

The interval methionine 1–isoleucine 83 is domain I, interacts with DnaA modulators. The domain II stretch occupies residues isoleucine 83–asparagine 146. Residues glycine 110–asparagine 146 form a disordered region. Over residues leucine 116 to glutamine 125 the composition is skewed to basic residues. Over residues serine 135–asparagine 146 the composition is skewed to basic and acidic residues. The segment at glutamine 147–alanine 364 is domain III, AAA+ region. The ATP site is built by glycine 191, glycine 193, lysine 194, and threonine 195. The domain IV, binds dsDNA stretch occupies residues threonine 365–glycine 484.

This sequence belongs to the DnaA family. In terms of assembly, oligomerizes as a right-handed, spiral filament on DNA at oriC.

It localises to the cytoplasm. In terms of biological role, plays an essential role in the initiation and regulation of chromosomal replication. ATP-DnaA binds to the origin of replication (oriC) to initiate formation of the DNA replication initiation complex once per cell cycle. Binds the DnaA box (a 9 base pair repeat at the origin) and separates the double-stranded (ds)DNA. Forms a right-handed helical filament on oriC DNA; dsDNA binds to the exterior of the filament while single-stranded (ss)DNA is stabiized in the filament's interior. The ATP-DnaA-oriC complex binds and stabilizes one strand of the AT-rich DNA unwinding element (DUE), permitting loading of DNA polymerase. After initiation quickly degrades to an ADP-DnaA complex that is not apt for DNA replication. Binds acidic phospholipids. The chain is Chromosomal replication initiator protein DnaA from Zymomonas mobilis subsp. mobilis (strain ATCC 31821 / ZM4 / CP4).